We begin with the raw amino-acid sequence, 185 residues long: Ribosome-recycling factor (185 aa).

It belongs to the RRF family.

It is found in the cytoplasm. Responsible for the release of ribosomes from messenger RNA at the termination of protein biosynthesis. May increase the efficiency of translation by recycling ribosomes from one round of translation to another. The chain is Ribosome-recycling factor from Campylobacter hominis (strain ATCC BAA-381 / DSM 21671 / CCUG 45161 / LMG 19568 / NCTC 13146 / CH001A).